A 243-amino-acid polypeptide reads, in one-letter code: Carboxy-S-adenosyl-L-methionine synthase (243 aa).

Residues tyrosine 40, 65 to 67 (GCS), 90 to 91 (DN), 118 to 119 (DI), asparagine 133, and arginine 200 each bind S-adenosyl-L-methionine.

It belongs to the class I-like SAM-binding methyltransferase superfamily. Cx-SAM synthase family. In terms of assembly, homodimer.

The catalysed reaction is prephenate + S-adenosyl-L-methionine = carboxy-S-adenosyl-L-methionine + 3-phenylpyruvate + H2O. Its function is as follows. Catalyzes the conversion of S-adenosyl-L-methionine (SAM) to carboxy-S-adenosyl-L-methionine (Cx-SAM). In Shewanella amazonensis (strain ATCC BAA-1098 / SB2B), this protein is Carboxy-S-adenosyl-L-methionine synthase.